Here is a 77-residue protein sequence, read N- to C-terminus: UPF0291 protein OB1671 (77 aa).

The segment at 56 to 77 (DPEGKDVTPQKLRDYQDRNKKH) is disordered. Residues 57 to 77 (PEGKDVTPQKLRDYQDRNKKH) are compositionally biased toward basic and acidic residues.

Belongs to the UPF0291 family.

The protein localises to the cytoplasm. The polypeptide is UPF0291 protein OB1671 (Oceanobacillus iheyensis (strain DSM 14371 / CIP 107618 / JCM 11309 / KCTC 3954 / HTE831)).